The primary structure comprises 305 residues: Ribonucleoside-diphosphate reductase small subunit (305 aa).

Fe cation contacts are provided by Glu-64, Glu-94, and His-97. The active site involves Tyr-101. Residues 150-170 traverse the membrane as a helical segment; that stretch reads ILMFLIVEGIYFISSFYSISL. The Fe cation site is built by Glu-157, Glu-191, and His-194.

The protein belongs to the ribonucleoside diphosphate reductase small chain family. As to quaternary structure, heterotetramer composed of a homodimer of the large subunit (R1) and a homodimer of the small subunit (R2). Larger multisubunit protein complex are also active, composed of (R1)n(R2)n. It depends on Fe cation as a cofactor.

It localises to the host membrane. It catalyses the reaction a 2'-deoxyribonucleoside 5'-diphosphate + [thioredoxin]-disulfide + H2O = a ribonucleoside 5'-diphosphate + [thioredoxin]-dithiol. Functionally, ribonucleoside-diphosphate reductase holoenzyme provides the precursors necessary for viral DNA synthesis. Allows virus growth in non-dividing cells, as well as reactivation from latency in infected hosts. Catalyzes the biosynthesis of deoxyribonucleotides from the corresponding ribonucleotides. The chain is Ribonucleoside-diphosphate reductase small subunit from Homo sapiens (Human).